Here is a 154-residue protein sequence, read N- to C-terminus: Myoglobin (154 aa).

Residues 2 to 148 (GLSDDEWHHV…FRNDMASKYK (147 aa)) enclose the Globin domain. His65 provides a ligand contact to nitrite. O2 is bound at residue His65. His94 contributes to the heme b binding site.

This sequence belongs to the globin family. As to quaternary structure, monomeric.

The protein resides in the cytoplasm. The protein localises to the sarcoplasm. The enzyme catalyses Fe(III)-heme b-[protein] + nitric oxide + H2O = Fe(II)-heme b-[protein] + nitrite + 2 H(+). The catalysed reaction is H2O2 + AH2 = A + 2 H2O. Its function is as follows. Monomeric heme protein which primary function is to store oxygen and facilitate its diffusion within muscle tissues. Reversibly binds oxygen through a pentacoordinated heme iron and enables its timely and efficient release as needed during periods of heightened demand. Depending on the oxidative conditions of tissues and cells, and in addition to its ability to bind oxygen, it also has a nitrite reductase activity whereby it regulates the production of bioactive nitric oxide. Under stress conditions, like hypoxia and anoxia, it also protects cells against reactive oxygen species thanks to its pseudoperoxidase activity. This is Myoglobin (MB) from Graptemys geographica (Common map turtle).